Here is a 101-residue protein sequence, read N- to C-terminus: RNA-binding protein Hfq (101 aa).

In terms of domain architecture, Sm spans 9-68; sequence DPFLNALRRERVPVSIYLVNGIKLQGQIESFDQFVILLKNTVSQMVYKHAISTVVPSRPV. The interval 63-101 is disordered; that stretch reads VPSRPVSHHNNNPSGGSSNYHHGSTPASQPSQPESDDAE. A compositionally biased stretch (low complexity) spans 70–86; that stretch reads HHNNNPSGGSSNYHHGS.

The protein belongs to the Hfq family. In terms of assembly, homohexamer.

In terms of biological role, RNA chaperone that binds small regulatory RNA (sRNAs) and mRNAs to facilitate mRNA translational regulation in response to envelope stress, environmental stress and changes in metabolite concentrations. Also binds with high specificity to tRNAs. This is RNA-binding protein Hfq from Sodalis glossinidius (strain morsitans).